A 534-amino-acid chain; its full sequence is Apolipoprotein N-acyltransferase (534 aa).

A run of 7 helical transmembrane segments spans residues 8–28 (VILV…AFAV), 31–51 (LPPF…VWLI), 69–89 (AFAV…WWLG), 105–125 (LAIL…VALA), 127–147 (IFWS…GLME), 178–198 (VIGA…PALF), and 208–228 (VALA…ALYL). The 251-residue stretch at 246–496 (VQPDIDQAAK…TGFIDATVDS (251 aa)) folds into the CN hydrolase domain. The Proton acceptor role is filled by Glu-291. The active site involves Lys-355. Residue Cys-408 is the Nucleophile of the active site. A helical transmembrane segment spans residues 511–531 (FWLTEALLILIALISREGFIF).

Belongs to the CN hydrolase family. Apolipoprotein N-acyltransferase subfamily.

Its subcellular location is the cell inner membrane. The catalysed reaction is N-terminal S-1,2-diacyl-sn-glyceryl-L-cysteinyl-[lipoprotein] + a glycerophospholipid = N-acyl-S-1,2-diacyl-sn-glyceryl-L-cysteinyl-[lipoprotein] + a 2-acyl-sn-glycero-3-phospholipid + H(+). Its pathway is protein modification; lipoprotein biosynthesis (N-acyl transfer). Functionally, catalyzes the phospholipid dependent N-acylation of the N-terminal cysteine of apolipoprotein, the last step in lipoprotein maturation. This is Apolipoprotein N-acyltransferase from Rhizobium etli (strain CIAT 652).